Here is a 190-residue protein sequence, read N- to C-terminus: dCTP deaminase (190 aa).

Residue 113-118 (KSTYAR) coordinates dCTP. The Proton donor/acceptor role is filled by glutamate 139. DCTP contacts are provided by glutamine 158, tyrosine 172, lysine 181, and glutamine 182.

It belongs to the dCTP deaminase family. Homotrimer.

The enzyme catalyses dCTP + H2O + H(+) = dUTP + NH4(+). It participates in pyrimidine metabolism; dUMP biosynthesis; dUMP from dCTP (dUTP route): step 1/2. Catalyzes the deamination of dCTP to dUTP. The chain is dCTP deaminase from Chlamydia trachomatis serovar L2 (strain ATCC VR-902B / DSM 19102 / 434/Bu).